The following is a 155-amino-acid chain: Ribosome maturation factor RimP (155 aa).

This sequence belongs to the RimP family.

The protein resides in the cytoplasm. Functionally, required for maturation of 30S ribosomal subunits. The chain is Ribosome maturation factor RimP from Parasynechococcus marenigrum (strain WH8102).